Reading from the N-terminus, the 370-residue chain is Protein RecA (370 aa).

The disordered stretch occupies residues 1–20; the sequence is MSFEERRKKDSKESSSKEKD. 78–85 serves as a coordination point for ATP; that stretch reads GPESSGKT.

This sequence belongs to the RecA family.

It localises to the cytoplasm. In terms of biological role, can catalyze the hydrolysis of ATP in the presence of single-stranded DNA, the ATP-dependent uptake of single-stranded DNA by duplex DNA, and the ATP-dependent hybridization of homologous single-stranded DNAs. It interacts with LexA causing its activation and leading to its autocatalytic cleavage. This chain is Protein RecA, found in Prochlorococcus marinus (strain MIT 9515).